Consider the following 317-residue polypeptide: Aspartate carbamoyltransferase catalytic subunit (317 aa).

Residues arginine 55 and threonine 56 each contribute to the carbamoyl phosphate site. Residue lysine 83 participates in L-aspartate binding. Residues arginine 105, histidine 138, and glutamine 141 each contribute to the carbamoyl phosphate site. L-aspartate contacts are provided by arginine 171 and arginine 225. The carbamoyl phosphate site is built by glycine 266 and proline 267.

It belongs to the aspartate/ornithine carbamoyltransferase superfamily. ATCase family. In terms of assembly, heterododecamer (2C3:3R2) of six catalytic PyrB chains organized as two trimers (C3), and six regulatory PyrI chains organized as three dimers (R2).

The enzyme catalyses carbamoyl phosphate + L-aspartate = N-carbamoyl-L-aspartate + phosphate + H(+). The protein operates within pyrimidine metabolism; UMP biosynthesis via de novo pathway; (S)-dihydroorotate from bicarbonate: step 2/3. In terms of biological role, catalyzes the condensation of carbamoyl phosphate and aspartate to form carbamoyl aspartate and inorganic phosphate, the committed step in the de novo pyrimidine nucleotide biosynthesis pathway. This chain is Aspartate carbamoyltransferase catalytic subunit, found in Mycobacteroides abscessus (strain ATCC 19977 / DSM 44196 / CCUG 20993 / CIP 104536 / JCM 13569 / NCTC 13031 / TMC 1543 / L948) (Mycobacterium abscessus).